The primary structure comprises 165 residues: MSSAPTTPPSVDKVDGFSRKSVRKARQKRSQSSSQFRSQGKPIELTPLPLLKDVPSSEQPELFLKKLQQCCVIFDFMDTLSDLKMKEYKRSTLNELVDYITISRGCLTEQTYPEVVRMVSCNIFRTLPPSDSNEFDPEEDEPTLEASWPHLQLVYEFFIRFLESQ.

The segment at 1-41 (MSSAPTTPPSVDKVDGFSRKSVRKARQKRSQSSSQFRSQGK) is disordered. Serine 2 carries the post-translational modification N-acetylserine. Phosphothreonine is present on threonine 7. The span at 20–29 (KSVRKARQKR) shows a compositional bias: basic residues. Phosphoserine is present on residues serine 30, serine 32, and serine 34. The span at 30-41 (SQSSSQFRSQGK) shows a compositional bias: low complexity.

It belongs to the phosphatase 2A regulatory subunit B56 family. PP2A consists of a common heterodimeric core enzyme, composed of a 36 kDa catalytic subunit (subunit C) and a 65 kDa constant regulatory subunit (PR65 or subunit A), that associates with a variety of regulatory subunits. Proteins that associate with the core dimer include three families of regulatory subunits B (the R2/B/PR55/B55, R3/B''/PR72/PR130/PR59 and R5/B'/B56 families), the 48 kDa variable regulatory subunit, viral proteins, and cell signaling molecules. Interacts with SGO1. Found in a complex with at least ARL2, PPP2CB; PPP2R1A, PPP2R2A, PPP2R5E and TBCD. As to expression, highly expressed in testis, lung and brain.

It is found in the cytoplasm. In terms of biological role, the B regulatory subunit might modulate substrate selectivity and catalytic activity, and might also direct the localization of the catalytic enzyme to a particular subcellular compartment. The protein is Serine/threonine-protein phosphatase 2A 56 kDa regulatory subunit epsilon isoform (PPP2R5E) of Oryctolagus cuniculus (Rabbit).